The sequence spans 316 residues: Methionyl-tRNA formyltransferase (316 aa).

114–117 contributes to the (6S)-5,6,7,8-tetrahydrofolate binding site; sequence SLLP.

This sequence belongs to the Fmt family.

The enzyme catalyses L-methionyl-tRNA(fMet) + (6R)-10-formyltetrahydrofolate = N-formyl-L-methionyl-tRNA(fMet) + (6S)-5,6,7,8-tetrahydrofolate + H(+). In terms of biological role, attaches a formyl group to the free amino group of methionyl-tRNA(fMet). The formyl group appears to play a dual role in the initiator identity of N-formylmethionyl-tRNA by promoting its recognition by IF2 and preventing the misappropriation of this tRNA by the elongation apparatus. This chain is Methionyl-tRNA formyltransferase, found in Aromatoleum aromaticum (strain DSM 19018 / LMG 30748 / EbN1) (Azoarcus sp. (strain EbN1)).